A 3001-amino-acid chain; its full sequence is BEACH domain-containing protein C2 (3001 aa).

Disordered stretches follow at residues 43 to 80 (DFEQ…SSFG), 103 to 156 (DVQS…KATV), 1018 to 1076 (NVLA…NVGS), 1846 to 1868 (TFSS…PRDK), 2039 to 2071 (YSGT…SNPP), 2101 to 2132 (AEEH…RTSN), and 2193 to 2212 (NLAD…DRSW). A Phosphoserine modification is found at Ser48. Composition is skewed to polar residues over residues 57 to 72 (NESQ…FSNS), 121 to 132 (SMQQSLSETSLD), and 1037 to 1050 (SPYN…QLDS). Pro residues predominate over residues 1854–1863 (LEPPNNNAPP). Residues 2101-2119 (AEEHKRDEGRISGSHEHAS) are compositionally biased toward basic and acidic residues. The segment covering 2120 to 2129 (RTSAGNSDPR) has biased composition (polar residues). A BEACH-type PH domain is found at 2151–2260 (ELDERILLEL…GRRNAYRAIV (110 aa)). The span at 2196–2211 (DHSDESQSGDQEKDRS) shows a compositional bias: basic and acidic residues. The BEACH domain occupies 2275 to 2564 (QRPEQLLRRT…QLLTVPHMKR (290 aa)). 5 WD repeats span residues 2679–2718 (SGIR…TLET), 2721–2760 (GHCA…TSRT), 2802–2841 (GHRR…LIRR), 2842–2881 (LVGV…IAKA), and 2953–2992 (GQGQ…LKVV).

The polypeptide is BEACH domain-containing protein C2 (Arabidopsis thaliana (Mouse-ear cress)).